Consider the following 495-residue polypeptide: Geraniol 8-hydroxylase (495 aa).

The chain crosses the membrane as a helical span at residues 5–25 (FLTIAIGFLFTITLYQALNFF). Cysteine 438 provides a ligand contact to heme.

This sequence belongs to the cytochrome P450 family. Heme serves as cofactor. Expressed in leaves, stems and roots.

It is found in the endoplasmic reticulum membrane. It carries out the reaction (2E)-geraniol + reduced [NADPH--hemoprotein reductase] + O2 = (6E)-8-hydroxygeraniol + oxidized [NADPH--hemoprotein reductase] + H2O + H(+). Its function is as follows. Hydroxylase involved in the biosynthesis of hydroxygeraniol, a precursor of the iridoid monoterpenoid swertiamarin. This is Geraniol 8-hydroxylase (CYP76B10) from Swertia mussotii (Felwort).